Reading from the N-terminus, the 57-residue chain is High-potential iron-sulfur protein (57 aa).

[4Fe-4S] cluster-binding residues include Cys-21, Cys-24, Cys-33, and Cys-46.

This sequence belongs to the high-potential iron-sulfur protein (HiPIP) family. As to quaternary structure, homodimer.

Functionally, specific class of high-redox-potential 4Fe-4S ferredoxins. Functions in anaerobic electron transport in most purple and in some other photosynthetic bacteria and in at least one genus (Paracoccus) of halophilic, denitrifying bacteria. This Rhodopila globiformis (Rhodopseudomonas globiformis) protein is High-potential iron-sulfur protein (hip).